Here is a 352-residue protein sequence, read N- to C-terminus: Photosystem II D2 protein (352 aa).

The chain crosses the membrane as a helical span at residues T40–T60. A chlorophyll a-binding site is contributed by H117. Residues G124 to P140 traverse the membrane as a helical segment. 2 residues coordinate pheophytin a: Q129 and N142. The helical transmembrane segment at V152 to S165 threads the bilayer. H197 contacts chlorophyll a. A helical transmembrane segment spans residues G207–E227. A plastoquinone is bound by residues H214 and F261. H214 contributes to the Fe cation binding site. Position 268 (H268) interacts with Fe cation. A helical transmembrane segment spans residues G278–R294.

The protein belongs to the reaction center PufL/M/PsbA/D family. PSII is composed of 1 copy each of membrane proteins PsbA, PsbB, PsbC, PsbD, PsbE, PsbF, PsbH, PsbI, PsbJ, PsbK, PsbL, PsbM, PsbT, PsbX, PsbY, PsbZ, Psb30/Ycf12, at least 3 peripheral proteins of the oxygen-evolving complex and a large number of cofactors. It forms dimeric complexes. The D1/D2 heterodimer binds P680, chlorophylls that are the primary electron donor of PSII, and subsequent electron acceptors. It shares a non-heme iron and each subunit binds pheophytin, quinone, additional chlorophylls, carotenoids and lipids. There is also a Cl(-1) ion associated with D1 and D2, which is required for oxygen evolution. The PSII complex binds additional chlorophylls, carotenoids and specific lipids. serves as cofactor.

It localises to the plastid. Its subcellular location is the organellar chromatophore thylakoid membrane. The enzyme catalyses 2 a plastoquinone + 4 hnu + 2 H2O = 2 a plastoquinol + O2. Photosystem II (PSII) is a light-driven water:plastoquinone oxidoreductase that uses light energy to abstract electrons from H(2)O, generating O(2) and a proton gradient subsequently used for ATP formation. It consists of a core antenna complex that captures photons, and an electron transfer chain that converts photonic excitation into a charge separation. The D1/D2 (PsbA/PsbD) reaction center heterodimer binds P680, the primary electron donor of PSII as well as several subsequent electron acceptors. D2 is needed for assembly of a stable PSII complex. The polypeptide is Photosystem II D2 protein (Paulinella chromatophora).